Reading from the N-terminus, the 231-residue chain is Monothiol glutaredoxin-6 (231 aa).

The signal sequence occupies residues 1-29; the sequence is MIPSNKRNARILSITTLLLLLVFFVAQNA. The Glutaredoxin domain occupies 116 to 219; that stretch reads QKEYSLILDL…ESLQVWSDGK (104 aa). C136 contributes to the [2Fe-2S] cluster binding site.

This sequence belongs to the glutaredoxin family. Monothiol subfamily.

Its subcellular location is the vacuole. This is Monothiol glutaredoxin-6 (GRX6) from Saccharomyces cerevisiae (strain ATCC 204508 / S288c) (Baker's yeast).